A 477-amino-acid chain; its full sequence is ATP synthase subunit beta (477 aa).

151 to 158 contributes to the ATP binding site; sequence GGAGVGKT.

Belongs to the ATPase alpha/beta chains family. In terms of assembly, F-type ATPases have 2 components, CF(1) - the catalytic core - and CF(0) - the membrane proton channel. CF(1) has five subunits: alpha(3), beta(3), gamma(1), delta(1), epsilon(1). CF(0) has three main subunits: a(1), b(2) and c(9-12). The alpha and beta chains form an alternating ring which encloses part of the gamma chain. CF(1) is attached to CF(0) by a central stalk formed by the gamma and epsilon chains, while a peripheral stalk is formed by the delta and b chains.

Its subcellular location is the cell inner membrane. The catalysed reaction is ATP + H2O + 4 H(+)(in) = ADP + phosphate + 5 H(+)(out). In terms of biological role, produces ATP from ADP in the presence of a proton gradient across the membrane. The catalytic sites are hosted primarily by the beta subunits. The polypeptide is ATP synthase subunit beta (Bradyrhizobium diazoefficiens (strain JCM 10833 / BCRC 13528 / IAM 13628 / NBRC 14792 / USDA 110)).